The sequence spans 335 residues: Mevalonate kinase (335 aa).

111–121 (PVGAGLGSSAA) contacts ATP. Aspartate 162 (proton acceptor) is an active-site residue.

Belongs to the GHMP kinase family. Mevalonate kinase subfamily. Homodimer. It depends on Mg(2+) as a cofactor.

The protein resides in the cytoplasm. It carries out the reaction (R)-mevalonate + ATP = (R)-5-phosphomevalonate + ADP + H(+). It functions in the pathway isoprenoid biosynthesis; isopentenyl diphosphate biosynthesis via mevalonate pathway; isopentenyl diphosphate from (R)-mevalonate: step 1/3. In terms of biological role, catalyzes the phosphorylation of (R)-mevalonate (MVA) to (R)-mevalonate 5-phosphate (MVAP). Functions in the mevalonate (MVA) pathway leading to isopentenyl diphosphate (IPP), a key precursor for the biosynthesis of isoprenoid compounds such as archaeal membrane lipids. In Pyrococcus abyssi (strain GE5 / Orsay), this protein is Mevalonate kinase.